A 334-amino-acid chain; its full sequence is N-acetyl-gamma-glutamyl-phosphate reductase (334 aa).

Residue cysteine 154 is part of the active site.

It belongs to the NAGSA dehydrogenase family. Type 1 subfamily.

It is found in the cytoplasm. The enzyme catalyses N-acetyl-L-glutamate 5-semialdehyde + phosphate + NADP(+) = N-acetyl-L-glutamyl 5-phosphate + NADPH + H(+). The protein operates within amino-acid biosynthesis; L-arginine biosynthesis; N(2)-acetyl-L-ornithine from L-glutamate: step 3/4. Its function is as follows. Catalyzes the NADPH-dependent reduction of N-acetyl-5-glutamyl phosphate to yield N-acetyl-L-glutamate 5-semialdehyde. The polypeptide is N-acetyl-gamma-glutamyl-phosphate reductase (Buchnera aphidicola subsp. Schizaphis graminum (strain Sg)).